A 237-amino-acid polypeptide reads, in one-letter code: 2-C-methyl-D-erythritol 4-phosphate cytidylyltransferase (237 aa).

The protein belongs to the IspD/TarI cytidylyltransferase family. IspD subfamily.

It carries out the reaction 2-C-methyl-D-erythritol 4-phosphate + CTP + H(+) = 4-CDP-2-C-methyl-D-erythritol + diphosphate. Its pathway is isoprenoid biosynthesis; isopentenyl diphosphate biosynthesis via DXP pathway; isopentenyl diphosphate from 1-deoxy-D-xylulose 5-phosphate: step 2/6. Functionally, catalyzes the formation of 4-diphosphocytidyl-2-C-methyl-D-erythritol from CTP and 2-C-methyl-D-erythritol 4-phosphate (MEP). The polypeptide is 2-C-methyl-D-erythritol 4-phosphate cytidylyltransferase (Vibrio vulnificus (strain YJ016)).